Here is a 37-residue protein sequence, read N- to C-terminus: Large ribosomal subunit protein bL36c (37 aa).

It belongs to the bacterial ribosomal protein bL36 family.

It localises to the plastid. The protein resides in the chloroplast. This Pelargonium hortorum (Common geranium) protein is Large ribosomal subunit protein bL36c.